Reading from the N-terminus, the 502-residue chain is UPF0371 protein CLH_2534 (502 aa).

The protein belongs to the UPF0371 family.

In Clostridium botulinum (strain Alaska E43 / Type E3), this protein is UPF0371 protein CLH_2534.